The chain runs to 494 residues: Hexokinase-2 (494 aa).

Residues glycine 32–alanine 483 enclose the Hexokinase domain. The segment at serine 87–isoleucine 225 is hexokinase small subdomain. ADP-binding residues include glycine 101, threonine 102, and asparagine 103. Residues threonine 191, lysine 192, asparagine 226, and aspartate 227 each contribute to the D-glucose site. The segment at asparagine 226–aspartate 472 is hexokinase large subdomain. Threonine 250 serves as a coordination point for ADP. D-glucose-binding residues include asparagine 253, glutamate 281, and glutamate 312. Glycine 437 contributes to the ADP binding site.

It belongs to the hexokinase family. Expressed in roots, leaves, flowers, immature seeds, endosperm and seed coat.

The catalysed reaction is a D-hexose + ATP = a D-hexose 6-phosphate + ADP + H(+). The enzyme catalyses D-fructose + ATP = D-fructose 6-phosphate + ADP + H(+). It catalyses the reaction D-glucose + ATP = D-glucose 6-phosphate + ADP + H(+). The protein operates within carbohydrate metabolism; hexose metabolism. It functions in the pathway carbohydrate degradation; glycolysis; D-glyceraldehyde 3-phosphate and glycerone phosphate from D-glucose: step 1/4. In terms of biological role, fructose and glucose phosphorylating enzyme. The sequence is that of Hexokinase-2 (HXK2) from Oryza sativa subsp. japonica (Rice).